Reading from the N-terminus, the 364-residue chain is MVLSKYLDLPQHGAVLAEYIWIDAHFNIRSKCKTLDKKPTSIEDLPEWNFDGSSTDQAPGHDSDIYLRPAAIYPDPFRRGDNIIVLAECWNNDGTPNKFNHRHECAKLMSAHEKEVIWFGIEQEYTMFDESDNPVGWPKGGFPAPQGPYYCGVGTGKVFARDVVEAHYRACLYSGINISGINAEVMPSQWEYQVGPCEGISMADELWMSRYLLHRVAEEFGIKISFHPKPLQGDWNGAGCHTNVSTKSMREPGGMKHIEAAIEKLAARHKEHIAVYGEDNDMRLTGRHETGSIGSFSSGVANRGCSIRIPRSVAKEGYGYFEDRRPASNIDPYLVTGIMTETICGSIPDADMVEETKRGEEEGF.

A GS beta-grasp domain is found at 15–94 (VLAEYIWIDA…VLAECWNNDG (80 aa)). Residues 101–364 (HRHECAKLMS…ETKRGEEEGF (264 aa)) form the GS catalytic domain.

It belongs to the glutamine synthetase family. In terms of assembly, homooctamer.

The protein localises to the cytoplasm. It catalyses the reaction L-glutamate + NH4(+) + ATP = L-glutamine + ADP + phosphate + H(+). In Yarrowia lipolytica (strain CLIB 122 / E 150) (Yeast), this protein is Glutamine synthetase (GLN1).